The sequence spans 431 residues: Probable pectate lyase 1 (431 aa).

A signal peptide spans 1-20 (MAVLPTWLLAMMCLLFFVGA). 3 N-linked (GlcNAc...) asparagine glycosylation sites follow: N23, N28, and N65. 3 residues coordinate Ca(2+): D227, D251, and D255. Residue R307 is part of the active site.

This sequence belongs to the polysaccharide lyase 1 family. Ca(2+) is required as a cofactor. In terms of tissue distribution, expressed in flowers, but not in leaves.

The enzyme catalyses Eliminative cleavage of (1-&gt;4)-alpha-D-galacturonan to give oligosaccharides with 4-deoxy-alpha-D-galact-4-enuronosyl groups at their non-reducing ends.. Its pathway is glycan metabolism; pectin degradation; 2-dehydro-3-deoxy-D-gluconate from pectin: step 2/5. This chain is Probable pectate lyase 1, found in Arabidopsis thaliana (Mouse-ear cress).